We begin with the raw amino-acid sequence, 907 residues long: Valine--tRNA ligase (907 aa).

Residues 45 to 55 (PNVTGSLHMGH) carry the 'HIGH' region motif. Residues 554 to 558 (KMSKS) carry the 'KMSKS' region motif. K557 contributes to the ATP binding site. A coiled-coil region spans residues 838-870 (GQLIDLEAERARLMKDVSKIEQDIEKLSAKLSN).

The protein belongs to the class-I aminoacyl-tRNA synthetase family. ValS type 1 subfamily. Monomer.

Its subcellular location is the cytoplasm. It carries out the reaction tRNA(Val) + L-valine + ATP = L-valyl-tRNA(Val) + AMP + diphosphate. Its function is as follows. Catalyzes the attachment of valine to tRNA(Val). As ValRS can inadvertently accommodate and process structurally similar amino acids such as threonine, to avoid such errors, it has a 'posttransfer' editing activity that hydrolyzes mischarged Thr-tRNA(Val) in a tRNA-dependent manner. The protein is Valine--tRNA ligase of Bartonella henselae (strain ATCC 49882 / DSM 28221 / CCUG 30454 / Houston 1) (Rochalimaea henselae).